The following is a 390-amino-acid chain: Chorismate synthase (390 aa).

NADP(+) is bound by residues Arg48 and Arg54. Residues Arg125 to Ser127, Asn238 to Ala239, Gly278, Lys293 to Ser297, and Arg319 contribute to the FMN site. Residues Lys360 to Ser390 are disordered. Polar residues predominate over residues Ile366–Pro376.

Belongs to the chorismate synthase family. Homotetramer. FMNH2 serves as cofactor.

The enzyme catalyses 5-O-(1-carboxyvinyl)-3-phosphoshikimate = chorismate + phosphate. It functions in the pathway metabolic intermediate biosynthesis; chorismate biosynthesis; chorismate from D-erythrose 4-phosphate and phosphoenolpyruvate: step 7/7. Its function is as follows. Catalyzes the anti-1,4-elimination of the C-3 phosphate and the C-6 proR hydrogen from 5-enolpyruvylshikimate-3-phosphate (EPSP) to yield chorismate, which is the branch point compound that serves as the starting substrate for the three terminal pathways of aromatic amino acid biosynthesis. This reaction introduces a second double bond into the aromatic ring system. The sequence is that of Chorismate synthase from Nitrosomonas eutropha (strain DSM 101675 / C91 / Nm57).